We begin with the raw amino-acid sequence, 445 residues long: Phosphoglucosamine mutase (445 aa).

The active-site Phosphoserine intermediate is Ser100. Ser100, Asp240, Asp242, and Asp244 together coordinate Mg(2+). Ser100 is subject to Phosphoserine.

Belongs to the phosphohexose mutase family. It depends on Mg(2+) as a cofactor. Post-translationally, activated by phosphorylation.

The enzyme catalyses alpha-D-glucosamine 1-phosphate = D-glucosamine 6-phosphate. Its function is as follows. Catalyzes the conversion of glucosamine-6-phosphate to glucosamine-1-phosphate. In Pelotomaculum thermopropionicum (strain DSM 13744 / JCM 10971 / SI), this protein is Phosphoglucosamine mutase.